Consider the following 295-residue polypeptide: MSVKHFIQITKPGIIFGNVLSVAGGFFLASKGHVDFALFLAVVIGTSLVVASGCVFNNCIDRDIDHKMERTKNRVMVQGGMSLPLALIYATLLGVAGFSLLYVQANPLSAFCALIGFVVYVGFYSLWLKRKSVHGTLVGSLSGAMPPVIGYCAVSNSFDLAAVTLLVMFSLWQMPHSFAIAIFRFKDYSAANIPVLPVARGILAAKKQIVLYVLAFVLATLMLTLGGYAGLGYLAVAAAMGLYWLYMAWGGYKAEDDSKWARKVFGFSILTVTALSVMMGVDSQTAADVLMTYAR.

The next 9 helical transmembrane spans lie at 9 to 29 (ITKPGIIFGNVLSVAGGFFLA), 36 to 56 (FALFLAVVIGTSLVVASGCVF), 83 to 103 (LPLALIYATLLGVAGFSLLYV), 108 to 128 (LSAFCALIGFVVYVGFYSLWL), 135 to 155 (GTLVGSLSGAMPPVIGYCAVS), 163 to 183 (VTLLVMFSLWQMPHSFAIAIF), 209 to 229 (IVLYVLAFVLATLMLTLGGYA), 230 to 250 (GLGYLAVAAAMGLYWLYMAWG), and 264 to 284 (VFGFSILTVTALSVMMGVDSQ).

Belongs to the UbiA prenyltransferase family. Protoheme IX farnesyltransferase subfamily.

The protein resides in the cell inner membrane. It catalyses the reaction heme b + (2E,6E)-farnesyl diphosphate + H2O = Fe(II)-heme o + diphosphate. Its pathway is porphyrin-containing compound metabolism; heme O biosynthesis; heme O from protoheme: step 1/1. In terms of biological role, converts heme B (protoheme IX) to heme O by substitution of the vinyl group on carbon 2 of heme B porphyrin ring with a hydroxyethyl farnesyl side group. The sequence is that of Protoheme IX farnesyltransferase 2 from Pseudomonas putida (strain ATCC 47054 / DSM 6125 / CFBP 8728 / NCIMB 11950 / KT2440).